We begin with the raw amino-acid sequence, 339 residues long: Ketol-acid reductoisomerase (NADP(+)) (339 aa).

The KARI N-terminal Rossmann domain maps to 1-182 (MKIYYEKDAD…GNTRAGVIET (182 aa)). Residues 24 to 27 (YGSQ), Ser51, Ser53, and 83 to 86 (DEKQ) each bind NADP(+). His108 is an active-site residue. Residue Gly134 coordinates NADP(+). Residues 183 to 328 (SFREETETDL…EKLRGMMHWA (146 aa)) enclose the KARI C-terminal knotted domain. Mg(2+) is bound by residues Asp191, Glu195, Glu227, and Glu231. Ser252 is a binding site for substrate.

This sequence belongs to the ketol-acid reductoisomerase family. Mg(2+) is required as a cofactor.

It catalyses the reaction (2R)-2,3-dihydroxy-3-methylbutanoate + NADP(+) = (2S)-2-acetolactate + NADPH + H(+). It carries out the reaction (2R,3R)-2,3-dihydroxy-3-methylpentanoate + NADP(+) = (S)-2-ethyl-2-hydroxy-3-oxobutanoate + NADPH + H(+). It functions in the pathway amino-acid biosynthesis; L-isoleucine biosynthesis; L-isoleucine from 2-oxobutanoate: step 2/4. It participates in amino-acid biosynthesis; L-valine biosynthesis; L-valine from pyruvate: step 2/4. In terms of biological role, involved in the biosynthesis of branched-chain amino acids (BCAA). Catalyzes an alkyl-migration followed by a ketol-acid reduction of (S)-2-acetolactate (S2AL) to yield (R)-2,3-dihydroxy-isovalerate. In the isomerase reaction, S2AL is rearranged via a Mg-dependent methyl migration to produce 3-hydroxy-3-methyl-2-ketobutyrate (HMKB). In the reductase reaction, this 2-ketoacid undergoes a metal-dependent reduction by NADPH to yield (R)-2,3-dihydroxy-isovalerate. This chain is Ketol-acid reductoisomerase (NADP(+)), found in Hyphomonas neptunium (strain ATCC 15444).